The chain runs to 209 residues: ATP-dependent Clp protease proteolytic subunit (209 aa).

Ser-106 functions as the Nucleophile in the catalytic mechanism. His-131 is an active-site residue.

It belongs to the peptidase S14 family. Fourteen ClpP subunits assemble into 2 heptameric rings which stack back to back to give a disk-like structure with a central cavity, resembling the structure of eukaryotic proteasomes.

The protein localises to the cytoplasm. It catalyses the reaction Hydrolysis of proteins to small peptides in the presence of ATP and magnesium. alpha-casein is the usual test substrate. In the absence of ATP, only oligopeptides shorter than five residues are hydrolyzed (such as succinyl-Leu-Tyr-|-NHMec, and Leu-Tyr-Leu-|-Tyr-Trp, in which cleavage of the -Tyr-|-Leu- and -Tyr-|-Trp bonds also occurs).. Its function is as follows. Cleaves peptides in various proteins in a process that requires ATP hydrolysis. Has a chymotrypsin-like activity. Plays a major role in the degradation of misfolded proteins. The polypeptide is ATP-dependent Clp protease proteolytic subunit (Caulobacter vibrioides (strain ATCC 19089 / CIP 103742 / CB 15) (Caulobacter crescentus)).